Here is a 174-residue protein sequence, read N- to C-terminus: Peptide deformylase (174 aa).

Cys-96 and His-138 together coordinate Fe cation. Glu-139 is a catalytic residue. Fe cation is bound at residue His-142.

The protein belongs to the polypeptide deformylase family. Fe(2+) serves as cofactor.

It carries out the reaction N-terminal N-formyl-L-methionyl-[peptide] + H2O = N-terminal L-methionyl-[peptide] + formate. Its function is as follows. Removes the formyl group from the N-terminal Met of newly synthesized proteins. Requires at least a dipeptide for an efficient rate of reaction. N-terminal L-methionine is a prerequisite for activity but the enzyme has broad specificity at other positions. In Nautilia profundicola (strain ATCC BAA-1463 / DSM 18972 / AmH), this protein is Peptide deformylase.